Here is a 162-residue protein sequence, read N- to C-terminus: Ribosome-binding factor A (162 aa).

The interval 121–162 (DEVARVAAGASPAGDPDPYKEPRAEDADDAEVDEPSGSRQAD) is disordered. The span at 125–136 (RVAAGASPAGDP) shows a compositional bias: low complexity.

Belongs to the RbfA family. Monomer. Binds 30S ribosomal subunits, but not 50S ribosomal subunits or 70S ribosomes.

The protein resides in the cytoplasm. In terms of biological role, one of several proteins that assist in the late maturation steps of the functional core of the 30S ribosomal subunit. Associates with free 30S ribosomal subunits (but not with 30S subunits that are part of 70S ribosomes or polysomes). Required for efficient processing of 16S rRNA. May interact with the 5'-terminal helix region of 16S rRNA. In Rhodococcus jostii (strain RHA1), this protein is Ribosome-binding factor A.